Reading from the N-terminus, the 440-residue chain is MGYLVKLACGLLLPLATADVNLAQQPFGEFEWQPKFDTPSGDHTSCAVSRLSAYEVGEGPVSFSLSPTEHPEIPKLSTINSTVWEQWEFDAVSESGTGSVLMGFSRDPSYSFFGQGNLRVEFYMTLEDGTRIQELEYTESSTVIDCPDSIRGIWNSSDRSYAFEISRDMQRARVWWDTGREKGSIAIESTTTPHLADGEIWPPEEGESRVKKSWPSVKLSPGLYMSQPIAGGKVTAHVQIGKKTMSITGYGAHSRLWAENSWFKICRGWQIMRGFLGPYTISYWRPLSRLDDWVPYFAAHLFKHGRLVFTSQVGAPSQQVDYTQFHSDFSGNVSGSLADKATGRVLEFVSPSTGKTWRFHHRHFAKMFEMGFGGGRGLTGFLDEIVGGEVGTDEEFTGRGFSEQVLLPDEIKQWQIWVVYGIGFLGRWKNTVTNLVLSIW.

Positions 1–18 are cleaved as a signal peptide; it reads MGYLVKLACGLLLPLATA. 3 N-linked (GlcNAc...) asparagine glycosylation sites follow: Asn80, Asn155, and Asn332.

This sequence belongs to the Diels-Alderase family.

The enzyme catalyses (5S)-5-(2-methylpropyl)-3-[(2E,6R,8E,10E,12E)-6,8,10,12-tetramethyltetradeca-2,8,10,12-tetraenoyl]-2,5-dihydro-1H-pyrrol-2-one = (5S)-3-[(1S,2R,4aR,6R,8aS)-2-(but-2-en-2-yl)-3,4a,6-trimethyl-1,2,4a,5,6,7,8,8a-octahydronaphthalene-1-carbonyl]-5-(2-methylpropyl)-2,5-dihydro-1H-pyrrol-2-one. It carries out the reaction (5Z)-5-(2-methylpropylidene)-3-[(2E,6R,8E,10E,12E)-6,8,10,12-tetramethyltetradeca-2,8,10,12-tetraenoyl]-2,5-dihydro-1H-pyrrol-2-one = myceliothermophin E. The protein operates within mycotoxin biosynthesis. Functionally, diels-Alderase; part of the gene cluster that mediates the biosynthesis of myceliothermophins, mycotoxins that contain a trans-fused decalin ring system connected to a conjugated 3-pyrrolin-2-one moiety and that have potential anti-tumor properties. The polyketide synthase module (PKS) of the PKS-NRPS mycA is responsible for the synthesis of the octaketide backbone. The downstream nonribosomal peptide synthetase (NRPS) module then amidates the carboxyl end of the octaketide with a leucine. A reductase-like domain (R) at the C-terminus catalyzes the reductive release of the polyketide-amino acid intermediate. Because mycA lacks a designated enoylreductase (ER) domain, the required activity is provided the enoyl reductase mycC. Following mycA-catalyzed construction and release of aminoacyl polyketide aldehyde, Knoevenagel condensation yields the expected ketone. This C18 keto acyclic precursor is the substrate of the Diels-Alderase mycB, that catalyzes the Diels-Alder cycloaddition to produce myceliothermophin E. A yet unknown oxygenase involved in the production of myceliothermophin A, via substitution with a hydroxyl group at the C21, has still to be identified. The sequence is that of Diels-Alderase mycB from Thermothelomyces thermophilus (strain ATCC 42464 / BCRC 31852 / DSM 1799) (Sporotrichum thermophile).